A 301-amino-acid chain; its full sequence is NADH-cytochrome b5 reductase 3 (301 aa).

G2 carries N-myristoyl glycine lipidation. Residues D40 to Q152 form the FAD-binding FR-type domain. K42 carries the post-translational modification N6-acetyllysine. At Y43 the chain carries Phosphotyrosine. The residue at position 50 (K50) is an N6-acetyllysine. R92, P93, Y94, V109, K111, and F114 together coordinate FAD. K120 bears the N6-acetyllysine mark. The FAD site is built by K126, M127, S128, and T185.

Belongs to the flavoprotein pyridine nucleotide cytochrome reductase family. Component of a complex composed of cytochrome b5, NADH-cytochrome b5 reductase (CYB5R3) and MTARC2. Interacts with MTLN; the interaction is required to maintain cellular lipid composition and leads to stimulation of mitochondrial respiratory complex I activity. FAD serves as cofactor.

It localises to the endoplasmic reticulum membrane. The protein resides in the mitochondrion outer membrane. The catalysed reaction is 2 Fe(III)-[cytochrome b5] + NADH = 2 Fe(II)-[cytochrome b5] + NAD(+) + H(+). Its function is as follows. Catalyzes the reduction of two molecules of cytochrome b5 using NADH as the electron donor. The protein is NADH-cytochrome b5 reductase 3 (CYB5R3) of Bos taurus (Bovine).